Reading from the N-terminus, the 120-residue chain is Large ribosomal subunit protein uL18 (120 aa).

The segment at Met-1–Asp-25 is disordered. Over residues Gln-10–Lys-21 the composition is skewed to basic residues.

It belongs to the universal ribosomal protein uL18 family. Part of the 50S ribosomal subunit; part of the 5S rRNA/L5/L18/L25 subcomplex. Contacts the 5S and 23S rRNAs.

Its function is as follows. This is one of the proteins that bind and probably mediate the attachment of the 5S RNA into the large ribosomal subunit, where it forms part of the central protuberance. The polypeptide is Large ribosomal subunit protein uL18 (Thermosynechococcus vestitus (strain NIES-2133 / IAM M-273 / BP-1)).